A 248-amino-acid chain; its full sequence is UPF0736 protein BCE_1296 (248 aa).

The protein belongs to the UPF0736 family.

The sequence is that of UPF0736 protein BCE_1296 from Bacillus cereus (strain ATCC 10987 / NRS 248).